Here is a 75-residue protein sequence, read N- to C-terminus: Putative antitoxin PH1062.1 (75 aa).

It belongs to the UPF0330 family.

Possibly the antitoxin component of a type II toxin-antitoxin (TA) system. The polypeptide is Putative antitoxin PH1062.1 (Pyrococcus horikoshii (strain ATCC 700860 / DSM 12428 / JCM 9974 / NBRC 100139 / OT-3)).